The primary structure comprises 197 residues: Chitin synthase 3 (197 aa).

Belongs to the chitin synthase family. Class III subfamily.

It localises to the cell membrane. The catalysed reaction is [(1-&gt;4)-N-acetyl-beta-D-glucosaminyl](n) + UDP-N-acetyl-alpha-D-glucosamine = [(1-&gt;4)-N-acetyl-beta-D-glucosaminyl](n+1) + UDP + H(+). Polymerizes chitin, a structural polymer of the cell wall and septum, by transferring the sugar moiety of UDP-GlcNAc to the non-reducing end of the growing chitin polymer. The protein is Chitin synthase 3 (CHS3) of Exophiala jeanselmei (Dematiaceous fungus).